Consider the following 258-residue polypeptide: Snake venom serine protease KN12 (258 aa).

Residues Met1–Ala18 form the signal peptide. Positions Gln19–Leu24 are excised as a propeptide. A Peptidase S1 domain is found at Val25–Ala249. 6 disulfides stabilise this stretch: Cys31–Cys163, Cys50–Cys66, Cys98–Cys256, Cys142–Cys210, Cys174–Cys189, and Cys200–Cys225. His65 serves as the catalytic Charge relay system. N-linked (GlcNAc...) asparagine glycosylation is present at Asn103. The active-site Charge relay system is the Asp110. N-linked (GlcNAc...) asparagine glycosylation is found at Asn121, Asn122, Asn154, and Asn170. Ser204 functions as the Charge relay system in the catalytic mechanism. The N-linked (GlcNAc...) asparagine glycan is linked to Asn251.

This sequence belongs to the peptidase S1 family. Snake venom subfamily. In terms of assembly, monomer. Expressed by the venom gland.

The protein resides in the secreted. In terms of biological role, snake venom serine protease that may act in the hemostasis system of the prey. This is Snake venom serine protease KN12 from Trimeresurus stejnegeri (Chinese green tree viper).